A 264-amino-acid chain; its full sequence is Thymidylate synthase (264 aa).

Arg-21 contacts dUMP. Residue His-51 participates in (6R)-5,10-methylene-5,6,7,8-tetrahydrofolate binding. 126 to 127 provides a ligand contact to dUMP; sequence RR. Cys-146 serves as the catalytic Nucleophile. Residues 166-169, Asn-177, and 207-209 contribute to the dUMP site; these read RSAD and HLY. Asp-169 contributes to the (6R)-5,10-methylene-5,6,7,8-tetrahydrofolate binding site. Ala-263 lines the (6R)-5,10-methylene-5,6,7,8-tetrahydrofolate pocket.

This sequence belongs to the thymidylate synthase family. Bacterial-type ThyA subfamily. As to quaternary structure, homodimer.

It localises to the cytoplasm. It catalyses the reaction dUMP + (6R)-5,10-methylene-5,6,7,8-tetrahydrofolate = 7,8-dihydrofolate + dTMP. The protein operates within pyrimidine metabolism; dTTP biosynthesis. In terms of biological role, catalyzes the reductive methylation of 2'-deoxyuridine-5'-monophosphate (dUMP) to 2'-deoxythymidine-5'-monophosphate (dTMP) while utilizing 5,10-methylenetetrahydrofolate (mTHF) as the methyl donor and reductant in the reaction, yielding dihydrofolate (DHF) as a by-product. This enzymatic reaction provides an intracellular de novo source of dTMP, an essential precursor for DNA biosynthesis. The protein is Thymidylate synthase of Dechloromonas aromatica (strain RCB).